A 322-amino-acid polypeptide reads, in one-letter code: METLILTQEEVESLISMDEAMNAVEEAFRLYALGKAQMPPKVYLEFEKGDLRAMPAHLMGYAGLKWVNSHPGNPDKGLPTVMALMILNSPETGFPLAVMDATYTTSLRTGAAGGIAAKYLARKNSSVFGFIGCGTQAYFQLEALRRVFDIGEVKAYDVREKAAKKFVSYCEDRGISASVQPAEEASRCDVLVTTTPSRKPVVKAEWVEEGTHINAIGADGPGKQELDVEILKKAKIVVDDLEQAKHGGEINVAVSKGVIGVEDVHATIGEVIAGLKDGRESDEEITIFDSTGLAIQDVAVAKVVYENALSKNVGSKIKFFRI.

Residue Lys65 is the Proton donor/acceptor of the active site. NAD(+) is bound by residues Arg108, 135-136 (TQ), 157-159 (DVR), 217-219 (GAD), Lys223, and Ser290.

Belongs to the ornithine cyclodeaminase/mu-crystallin family. Archaeal alanine dehydrogenase subfamily. In terms of assembly, homodimer.

It carries out the reaction L-alanine + NAD(+) + H2O = pyruvate + NH4(+) + NADH + H(+). Its function is as follows. Catalyzes the NAD(+)-dependent oxidative deamination of L-alanine to pyruvate, and the reverse reaction, the reductive amination of pyruvate. Its physiological role is not known. Cannot use NADP(+) instead of NAD(+) as a cosubstrate. In the deamination direction, can also efficiently use L-2-aminobutyrate as substrate. In the reductive amination direction, also exhibits high activity with 2-oxobutyrate and oxaloacetate as substrate. In contrast to bacterial homologs, does not exhibit any ornithine cyclodeaminase activity. The sequence is that of Alanine dehydrogenase from Archaeoglobus fulgidus (strain ATCC 49558 / DSM 4304 / JCM 9628 / NBRC 100126 / VC-16).